The primary structure comprises 70 residues: Small ribosomal subunit protein bS21 (70 aa).

Residues 43 to 70 form a disordered region; that stretch reads TERKRKAAAAVKRQHKRLRSLTLPPKLY. A compositionally biased stretch (basic residues) spans 45-61; the sequence is RKRKAAAAVKRQHKRLR.

It belongs to the bacterial ribosomal protein bS21 family.

The protein is Small ribosomal subunit protein bS21 of Dechloromonas aromatica (strain RCB).